A 285-amino-acid chain; its full sequence is Ribonuclease H1 (285 aa).

A disordered region spans residues 72 to 126; the sequence is RSSSSPDGSKGQESAHEQKSQAKTSKRPREPLGEGEELPEPGPKHTRQDTEPAAV. Residues 135 to 281 form the RNase H type-1 domain; it reads MGESVIVYTD…ADRLAREGAK (147 aa). The Mg(2+) site is built by aspartate 144, glutamate 185, aspartate 209, and aspartate 273.

The protein belongs to the RNase H family. Monomer. Mg(2+) serves as cofactor.

The protein localises to the cytoplasm. The enzyme catalyses Endonucleolytic cleavage to 5'-phosphomonoester.. Its activity is regulated as follows. In the presence of magnesium, manganese is inhibitory. Endonuclease that specifically degrades the RNA of RNA-DNA hybrids. Plays a role in RNA polymerase II (RNAp II) transcription termination by degrading R-loop RNA-DNA hybrid formation at G-rich pause sites located downstream of the poly(A) site and behind the elongating RNAp II. This chain is Ribonuclease H1 (Rnaseh1), found in Mus musculus (Mouse).